The chain runs to 1471 residues: Myosin-51 (1471 aa).

Residues 7–61 form the Myosin N-terminal SH3-like domain; it reads SVGSECWVSNNNGHWDAARLIEIKDNGGGKVVATVAKSSGVLETVNYQQLQNRNI. Residues 65–749 enclose the Myosin motor domain; sequence ESPSDLTNLP…VIGNFEEAHR (685 aa). 159-166 contributes to the ATP binding site; the sequence is GESGAGKT. An actin-binding region spans residues 628 to 650; the sequence is LSQLMTTVSSTNVHYIRCIKPNE. IQ domains are found at residues 753–773, 776–796, 801–821, 824–844, 849–869, and 872–892; these read SKST…KEYQ, VKFI…QRFE, ERAA…KRYL, IKCA…SRYI, ESSA…KTFR, and KKSV…RYLR. A coiled-coil region spans residues 909–952; that stretch reads KNLQASITEVSKQLKSNSKKVTVLRNKLNILNNSLSKWKCLIKK. Residues 1171-1417 form the Dilute domain; sequence EKPLQAVLYW…SKAVEALSCK (247 aa).

The protein belongs to the TRAFAC class myosin-kinesin ATPase superfamily. Myosin family.

Its subcellular location is the cytoplasm. In terms of biological role, involved in cytokinesis. The protein is Myosin-51 (myo51) of Schizosaccharomyces pombe (strain 972 / ATCC 24843) (Fission yeast).